The chain runs to 943 residues: UvrABC system protein A (943 aa).

32 to 39 (GLSGSGKS) provides a ligand contact to ATP. A C4-type zinc finger spans residues 251 to 278 (CPVCGFTVPELEPRLFSFNAPFGSCSEC). ABC transporter domains are found at residues 308-589 (WNPI…SKSI) and 609-937 (GNGR…HYLK). ATP is bound at residue 641-648 (GVSGSGKS). The C4-type zinc finger occupies 740–766 (CEACSGDGIIKIEMHFLPDVYVACEVC).

This sequence belongs to the ABC transporter superfamily. UvrA family. In terms of assembly, forms a heterotetramer with UvrB during the search for lesions.

It localises to the cytoplasm. The UvrABC repair system catalyzes the recognition and processing of DNA lesions. UvrA is an ATPase and a DNA-binding protein. A damage recognition complex composed of 2 UvrA and 2 UvrB subunits scans DNA for abnormalities. When the presence of a lesion has been verified by UvrB, the UvrA molecules dissociate. This is UvrABC system protein A from Streptococcus pneumoniae serotype 4 (strain ATCC BAA-334 / TIGR4).